A 338-amino-acid polypeptide reads, in one-letter code: 1-aminocyclopropane-1-carboxylate deaminase (338 aa).

Lys51 is subject to N6-(pyridoxal phosphate)lysine. Ser78 acts as the Nucleophile in catalysis.

This sequence belongs to the ACC deaminase/D-cysteine desulfhydrase family. As to quaternary structure, homotrimer. Pyridoxal 5'-phosphate serves as cofactor.

It catalyses the reaction 1-aminocyclopropane-1-carboxylate + H2O = 2-oxobutanoate + NH4(+). In terms of biological role, catalyzes a cyclopropane ring-opening reaction, the irreversible conversion of 1-aminocyclopropane-1-carboxylate (ACC) to ammonia and alpha-ketobutyrate. Allows growth on ACC as a nitrogen source. The polypeptide is 1-aminocyclopropane-1-carboxylate deaminase (Methylibium petroleiphilum (strain ATCC BAA-1232 / LMG 22953 / PM1)).